The following is a 431-amino-acid chain: Enolase (431 aa).

Residue Gln167 coordinates (2R)-2-phosphoglycerate. The active-site Proton donor is the Glu209. Mg(2+) contacts are provided by Asp246, Glu289, and Asp316. (2R)-2-phosphoglycerate contacts are provided by Lys341, Arg370, Ser371, and Lys392. The active-site Proton acceptor is the Lys341.

This sequence belongs to the enolase family. As to quaternary structure, component of the RNA degradosome, a multiprotein complex involved in RNA processing and mRNA degradation. Mg(2+) serves as cofactor.

The protein resides in the cytoplasm. Its subcellular location is the secreted. The protein localises to the cell surface. It carries out the reaction (2R)-2-phosphoglycerate = phosphoenolpyruvate + H2O. Its pathway is carbohydrate degradation; glycolysis; pyruvate from D-glyceraldehyde 3-phosphate: step 4/5. Its function is as follows. Catalyzes the reversible conversion of 2-phosphoglycerate (2-PG) into phosphoenolpyruvate (PEP). It is essential for the degradation of carbohydrates via glycolysis. The protein is Enolase of Shewanella oneidensis (strain ATCC 700550 / JCM 31522 / CIP 106686 / LMG 19005 / NCIMB 14063 / MR-1).